Here is a 619-residue protein sequence, read N- to C-terminus: MPTYRSKTSTAGRNMAGARSLWRATGMKDDDFSKPIIAVVNSFTQFVPGHVHLKDLGQLVAREIEAAGGVAKEFNTIAVDDGIAMGHDGMLYSLPSRDIIADSVEYMVNAHCADAMVCISNCDKITPGMLMAAMRLNIPVIFVSGGPMEAGKTRLANPVTKAIEVKKLDLVDAMVIAVDPSYSDAEVAEVERSACPTCGSCSGMFTANSMNCLTEALGLSLPGNGTVVATHADREQLFKRAGRRIVELTRQHYEQDDERVLPRSVGFKAFENAMTLDIAMGGSTNTILHLLAIAQEAGIDFTMKDIDRLSRVVPQLCKVAPNTNKYHIEDVHRAGGIMAILGELDRAGKLHTDVPTVHTPSLKDALDQWDIVRTQDDAVRTFYQAGPAGVPTQVAFSQNTRWPSLDLDRAEGCIRSYEHAFSKEGGLAVLTGNIALDGCVVKTAGVDESILVFEGTAHVTESQDEAVENILNDKVKAGDVVIVRYEGPKGGPGMQEMLYPTSYIKSKGLGKACALLTDGRFSGGTSGLSIGHCSPEAAAGGAIGLVRDGDKIRIDIPNRTINVLVSDEELARRREEQNAKGWKPAQPRPRKVSAALKAYAKLVMSADKGAVRDLSLLDD.

Residue Asp81 coordinates Mg(2+). Cys122 is a binding site for [2Fe-2S] cluster. Mg(2+)-binding residues include Asp123 and Lys124. Lys124 bears the N6-carboxylysine mark. Residue Cys201 participates in [2Fe-2S] cluster binding. Glu496 contributes to the Mg(2+) binding site. The active-site Proton acceptor is the Ser522.

The protein belongs to the IlvD/Edd family. As to quaternary structure, homodimer. Requires [2Fe-2S] cluster as cofactor. Mg(2+) serves as cofactor.

The catalysed reaction is (2R)-2,3-dihydroxy-3-methylbutanoate = 3-methyl-2-oxobutanoate + H2O. It catalyses the reaction (2R,3R)-2,3-dihydroxy-3-methylpentanoate = (S)-3-methyl-2-oxopentanoate + H2O. It functions in the pathway amino-acid biosynthesis; L-isoleucine biosynthesis; L-isoleucine from 2-oxobutanoate: step 3/4. The protein operates within amino-acid biosynthesis; L-valine biosynthesis; L-valine from pyruvate: step 3/4. Its function is as follows. Functions in the biosynthesis of branched-chain amino acids. Catalyzes the dehydration of (2R,3R)-2,3-dihydroxy-3-methylpentanoate (2,3-dihydroxy-3-methylvalerate) into 2-oxo-3-methylpentanoate (2-oxo-3-methylvalerate) and of (2R)-2,3-dihydroxy-3-methylbutanoate (2,3-dihydroxyisovalerate) into 2-oxo-3-methylbutanoate (2-oxoisovalerate), the penultimate precursor to L-isoleucine and L-valine, respectively. The chain is Dihydroxy-acid dehydratase 1 from Burkholderia lata (strain ATCC 17760 / DSM 23089 / LMG 22485 / NCIMB 9086 / R18194 / 383).